Consider the following 692-residue polypeptide: Potassium-transporting ATPase ATP-binding subunit (692 aa).

4 consecutive transmembrane segments (helical) span residues 50–70 (PIMF…FLPS), 77–97 (GWFN…ANFA), 240–260 (LTLI…YLGF), and 266–286 (VLVA…LSAI). The active-site 4-aspartylphosphate intermediate is the D319. ATP is bound by residues D356, E360, 388–395 (FKAETRMS), and K407. The Mg(2+) site is built by D530 and D534. Helical transmembrane passes span 600 to 620 (FAII…LNIM), 628 to 648 (AILS…PLAM), and 672 to 692 (GGVI…GLFI).

This sequence belongs to the cation transport ATPase (P-type) (TC 3.A.3) family. Type IA subfamily. The system is composed of three essential subunits: KdpA, KdpB and KdpC.

Its subcellular location is the cell membrane. The catalysed reaction is K(+)(out) + ATP + H2O = K(+)(in) + ADP + phosphate + H(+). Part of the high-affinity ATP-driven potassium transport (or Kdp) system, which catalyzes the hydrolysis of ATP coupled with the electrogenic transport of potassium into the cytoplasm. This subunit is responsible for energy coupling to the transport system and for the release of the potassium ions to the cytoplasm. This Bacillus cereus (strain 03BB102) protein is Potassium-transporting ATPase ATP-binding subunit.